The primary structure comprises 153 residues: Phosphatase NudJ (153 aa).

The region spanning 3–131 is the Nudix hydrolase domain; that stretch reads KPHVTVACVV…LVAESIRCYQ (129 aa). The Nudix box signature appears at 36–57; it reads GHLEADETLVEAAARELWEETG.

Belongs to the Nudix hydrolase family. NudJ subfamily. Monomer. Mg(2+) is required as a cofactor.

This Escherichia coli O139:H28 (strain E24377A / ETEC) protein is Phosphatase NudJ (nudJ).